The following is a 1064-amino-acid chain: Lysine-specific demethylase 4A (1064 aa).

A2 carries the N-acetylalanine modification. The JmjN domain maps to 14–56 (IMTFYPTMEEFRNFSRYIAYIESQGAHRAGLAKVVPPKEWKPR). Y132 lines the 2-oxoglutarate pocket. A JmjC domain is found at 142 to 308 (EKHVDEWNIG…YGKQAVLCSC (167 aa)). Positions 188 and 190 each coordinate Fe cation. 2-oxoglutarate contacts are provided by N198 and K206. C234 and H240 together coordinate Zn(2+). K241 serves as a coordination point for 2-oxoglutarate. Position 276 (H276) interacts with Fe cation. Zn(2+) is bound by residues C306 and C308. The interval 358 to 384 (ELPPRAGNEEECPEEDMEGVEDGEEGD) is disordered. Residues 366–382 (EEECPEEDMEGVEDGEE) show a composition bias toward acidic residues. A (Microbial infection) Glycyl lysine isopeptide (Lys-Gly) (interchain with G-Cter in SUMO) cross-link involves residue K471. Disordered stretches follow at residues 501 to 537 (FSGS…RAQG) and 616 to 641 (SDDE…KPLS). Residues 509-532 (SSSLGSGSSRDSISSDSETSEPLS) show a composition bias toward low complexity. At S523 the chain carries Phosphoserine. Residues 597 to 638 (RQPLSKLPRHHPLVLQECVSDDETSEQLTPEEEAEETEAWAK) are interaction with NCOR1. Over residues 616 to 634 (SDDETSEQLTPEEEAEETE) the composition is skewed to acidic residues. A PHD-type 1 zinc finger spans residues 709-767 (MCFTSTGCSTDINLSTPYLEEDGTSILVSCKKCSVRVHASCYGVPPAKASEDWMCSRCS). A C2HC pre-PHD-type zinc finger spans residues 772–805 (EEDCCLCSLRGGALQRANDDRWVHVSCAVAILEA). Residues 828–885 (LKCIFCKKRRKRTAGCCVQCSHGRCPTAFHVSCAQAAGVMMQPDDWPFVVFITCFRHK) form a PHD-type 2 zinc finger. 2 Tudor domains span residues 897-954 (QSIT…CLQF) and 955-1011 (GPPA…EELP).

It belongs to the JHDM3 histone demethylase family. Interacts with histone deacetylase proteins HDAC1, HDAC2 and HDAC3. Interacts with RB and NCOR1. Interacts with VRK1. Interacts with FBXO22; this interaction promotes KDM4A ubiquitination. In terms of assembly, (Microbial infection) Interacts with HTLV-1 Tax protein. Fe(2+) serves as cofactor. Post-translationally, (Microbial infection) SUMOylated by human herpesvirus 8 E3 SUMO-protein ligase K-bZIP/K8 at Lys-471; thereby modulating the chromatin binding and histone demethylase activity of KDM4A. Ubiquitinated by RNF8 and RNF168 following DNA damage, leading to its degradation. Degradation promotes accessibility of H4K20me2 mark for DNA repair protein TP53BP1, which is then recruited. Also ubiquitinated by the SCF(FBXO22) complex; leading to proteasomal degradation. In terms of tissue distribution, ubiquitous.

Its subcellular location is the nucleus. It carries out the reaction N(6),N(6),N(6)-trimethyl-L-lysyl(9)-[histone H3] + 2 2-oxoglutarate + 2 O2 = N(6)-methyl-L-lysyl(9)-[histone H3] + 2 formaldehyde + 2 succinate + 2 CO2. The catalysed reaction is N(6),N(6),N(6)-trimethyl-L-lysyl(36)-[histone H3] + 2 2-oxoglutarate + 2 O2 = N(6)-methyl-L-lysyl(36)-[histone H3] + 2 formaldehyde + 2 succinate + 2 CO2. With respect to regulation, several specific inhibitors are being developed and tested. Functionally, histone demethylase that specifically demethylates 'Lys-9' and 'Lys-36' residues of histone H3, thereby playing a central role in histone code. Does not demethylate histone H3 'Lys-4', H3 'Lys-27' nor H4 'Lys-20'. Demethylates trimethylated H3 'Lys-9' and H3 'Lys-36' residue, while it has no activity on mono- and dimethylated residues. Demethylation of Lys residue generates formaldehyde and succinate. Participates in transcriptional repression of ASCL2 and E2F-responsive promoters via the recruitment of histone deacetylases and NCOR1, respectively. Crucial for muscle differentiation, promotes transcriptional activation of the Myog gene by directing the removal of repressive chromatin marks at its promoter. Lacks the N-terminal demethylase domain. The sequence is that of Lysine-specific demethylase 4A (KDM4A) from Homo sapiens (Human).